Reading from the N-terminus, the 487-residue chain is Glutamyl-tRNA(Gln) amidotransferase subunit A (487 aa).

Catalysis depends on charge relay system residues Lys77 and Ser152. The active-site Acyl-ester intermediate is the Ser176.

Belongs to the amidase family. GatA subfamily. Heterotrimer of A, B and C subunits.

It carries out the reaction L-glutamyl-tRNA(Gln) + L-glutamine + ATP + H2O = L-glutaminyl-tRNA(Gln) + L-glutamate + ADP + phosphate + H(+). Its function is as follows. Allows the formation of correctly charged Gln-tRNA(Gln) through the transamidation of misacylated Glu-tRNA(Gln) in organisms which lack glutaminyl-tRNA synthetase. The reaction takes place in the presence of glutamine and ATP through an activated gamma-phospho-Glu-tRNA(Gln). The polypeptide is Glutamyl-tRNA(Gln) amidotransferase subunit A (Lysinibacillus sphaericus (strain C3-41)).